Consider the following 194-residue polypeptide: MGQIEWAMWANEQALASGLILVAGGIVATAGRFTQWYFGTYAIAAGVLVCLLEYPRGSRAKGSTLERCGQRYLTAVLKLLGPLSRNYYFRAALHLALSVPAGFLLATILGTVCLVIASIIYLLAAVRGEQWTPIEPRPKERPQVGGTIKQPPSNPPPRPPVEARKKPGEEDATPAGGPPGGPRVNPIPVTDEVV.

Over 2-7 (GQIEWA) the chain is Cytoplasmic. The helical transmembrane segment at 8 to 30 (MWANEQALASGLILVAGGIVATA) threads the bilayer. The Extracellular segment spans residues 31–35 (GRFTQ). Residues 36-53 (WYFGTYAIAAGVLVCLLE) form a helical membrane-spanning segment. Residues 54-69 (YPRGSRAKGSTLERCG) lie on the Cytoplasmic side of the membrane. Residues 70 to 80 (QRYLTAVLKLL) lie within the membrane without spanning it. The Cytoplasmic portion of the chain corresponds to 81–86 (GPLSRN). Residues 87 to 104 (YYFRAALHLALSVPAGFL) form a helical membrane-spanning segment. Residue L105 is a topological domain, extracellular. Residues 106–126 (ATILGTVCLVIASIIYLLAAV) form a helical membrane-spanning segment. Over 127-194 (RGEQWTPIEP…NPIPVTDEVV (68 aa)) the chain is Cytoplasmic. A disordered region spans residues 134 to 194 (IEPRPKERPQ…NPIPVTDEVV (61 aa)). T147 is subject to Phosphothreonine. K149 is covalently cross-linked (Glycyl lysine isopeptide (Lys-Gly) (interchain with G-Cter in ubiquitin)).

Belongs to the p22phox family. In terms of assembly, component of the phagocyte NADPH oxidase core complex/cytochrome b558 complex, composed of CYBB (heavy chain (beta)) and CYBA (light chain (alpha)). Component of the phagocyte NADPH oxidase complex composed of an obligatory core heterodimer formed by the membrane proteins CYBA and CYBB and the cytosolic regulatory subunits NCF1/p47-phox, NCF2/p67-phox, NCF4/p40-phox and the small GTPase RAC1 or RAC2. Interacts with NCF1 (via SH3 domain). Interacts with SH3PXD2A. Interacts with DUOX1, DUOX2 and TPO. Interacts with NOX4; this interaction mediates superoxide generation. Interacts with calprotectin (S100A8/9). Interacts with GBP7. Interacts with NOXO1. Forms a heterodimer with NOX3 and is essential for activity and cell membrane localization of NOX3. Interacts with NOX1. In terms of processing, phosphorylation at Thr-147 enhances NADPH oxidase activity by promoting NCF1/p47-phox binding. Post-translationally, ubiquitinated at Lys-149 likely by RNF145.

Its subcellular location is the cell membrane. In terms of biological role, subunit of NADPH oxidase complexes that is required for the NADPH oxidase activity that generates, in various cell types, superoxide from molecular oxygen utilizing NADPH as an electron donor. Subunit of the phagocyte NADPH oxidase complex that mediates the transfer of electrons from cytosolic NADPH to O2 to produce the superoxide anion (O2(-)). In the activated complex, electrons are first transferred from NADPH to flavin adenine dinucleotide (FAD) and subsequently transferred via two heme molecules to molecular oxygen, producing superoxide through an outer-sphere reaction. Activation of the NADPH oxidase complex is initiated by the assembly of cytosolic subunits of the NADPH oxidase complex with the core NADPH oxidase complex to form a complex at the plasma membrane or phagosomal membrane. This activation process is initiated by phosphorylation dependent binding of the cytosolic NCF1/p47-phox subunit to the C-terminus of CYBA/p22-phox. Aassociates with NOX3 to form a functional NADPH oxidase constitutively generating superoxide. In Oryctolagus cuniculus (Rabbit), this protein is Cytochrome b-245 light chain.